The primary structure comprises 498 residues: Glycerol kinase (498 aa).

Thr14 contributes to the ADP binding site. Positions 14, 15, and 16 each coordinate ATP. Sn-glycerol 3-phosphate is bound at residue Thr14. Residue Arg18 coordinates ADP. 4 residues coordinate sn-glycerol 3-phosphate: Arg84, Glu85, Tyr136, and Asp243. Residues Arg84, Glu85, Tyr136, Asp243, and Gln244 each contribute to the glycerol site. Residues Thr265 and Gly308 each coordinate ADP. ATP contacts are provided by Thr265, Gly308, Gln312, and Gly409. The ADP site is built by Gly409 and Asn413.

This sequence belongs to the FGGY kinase family.

The catalysed reaction is glycerol + ATP = sn-glycerol 3-phosphate + ADP + H(+). It participates in polyol metabolism; glycerol degradation via glycerol kinase pathway; sn-glycerol 3-phosphate from glycerol: step 1/1. Inhibited by fructose 1,6-bisphosphate (FBP). Key enzyme in the regulation of glycerol uptake and metabolism. Catalyzes the phosphorylation of glycerol to yield sn-glycerol 3-phosphate. This is Glycerol kinase from Shewanella frigidimarina (strain NCIMB 400).